The sequence spans 256 residues: CCAAT/enhancer-binding protein delta (256 aa).

An N-acetylserine modification is found at S2. Disordered regions lie at residues 18-40, 92-121, and 139-206; these read TAEPAAFYEPGRAGKPGRGAEPA, GGPARLGGPGPAPRPLKREPDWGDGDAPGS, and AAAQ…NQEM. K108 participates in a covalent cross-link: Glycyl lysine isopeptide (Lys-Gly) (interchain with G-Cter in SUMO). The segment covering 143 to 162 has biased composition (pro residues); it reads PTPPASPEPPRRSPAPPAPG. The segment covering 164–188 has biased composition (basic and acidic residues); that stretch reads ARDKAAGKRGPDRGSPEYRQRRERN. In terms of domain architecture, bZIP spans 178–241; it reads SPEYRQRRER…AGLRRFFKQL (64 aa). A basic motif region spans residues 182–209; it reads RQRRERNNIAVRKSRDKAKRRNQEMQQK. A leucine-zipper region spans residues 213 to 241; that stretch reads LSAENEKLQQRVEQLTRDLAGLRRFFKQL.

The protein belongs to the bZIP family. C/EBP subfamily. As to quaternary structure, binds DNA as a homodimer and as a heterodimer. Can form stable heterodimers with CEBPB. Can form stable heterodimers with CEBPA and CEBPE. Directly interacts with SPI1/PU.1; this interaction does not affect DNA-binding properties of each partner. Interacts with PRDM16.

It localises to the nucleus. Functionally, transcription activator that recognizes two different DNA motifs: the CCAAT homology common to many promoters and the enhanced core homology common to many enhancers. Important transcription factor regulating the expression of genes involved in immune and inflammatory responses. Transcriptional activator that enhances IL6 transcription alone and as heterodimer with CEBPB. The chain is CCAAT/enhancer-binding protein delta (CEBPD) from Bos taurus (Bovine).